Consider the following 457-residue polypeptide: Chromosomal replication initiator protein DnaA (457 aa).

The domain I, interacts with DnaA modulators stretch occupies residues 1-71 (MSPSIWEKCL…LLKNFCNINT (71 aa)). The segment at 71-119 (TTPTLMLKICKPKIIQKKFFNELTLKKNILNSKLTYNVNTKLSNIIYSS) is domain II. Residues 120–337 (EINTNYTFQN…GALNKILANS (218 aa)) are domain III, AAA+ region. The ATP site is built by glycine 165, glycine 167, lysine 168, and threonine 169. A domain IV, binds dsDNA region spans residues 338–457 (DSKKKIITIN…FLTLLKILSS (120 aa)).

The protein belongs to the DnaA family. Oligomerizes as a right-handed, spiral filament on DNA at oriC.

It localises to the cytoplasm. Functionally, plays an essential role in the initiation and regulation of chromosomal replication. ATP-DnaA binds to the origin of replication (oriC) to initiate formation of the DNA replication initiation complex once per cell cycle. Binds the DnaA box (a 9 base pair repeat at the origin) and separates the double-stranded (ds)DNA. Forms a right-handed helical filament on oriC DNA; dsDNA binds to the exterior of the filament while single-stranded (ss)DNA is stabiized in the filament's interior. The ATP-DnaA-oriC complex binds and stabilizes one strand of the AT-rich DNA unwinding element (DUE), permitting loading of DNA polymerase. After initiation quickly degrades to an ADP-DnaA complex that is not apt for DNA replication. Binds acidic phospholipids. This chain is Chromosomal replication initiator protein DnaA, found in Buchnera aphidicola subsp. Baizongia pistaciae (strain Bp).